The chain runs to 396 residues: Tryptophan synthase beta chain (396 aa).

N6-(pyridoxal phosphate)lysine is present on Lys-86.

It belongs to the TrpB family. Tetramer of two alpha and two beta chains. Pyridoxal 5'-phosphate serves as cofactor.

The catalysed reaction is (1S,2R)-1-C-(indol-3-yl)glycerol 3-phosphate + L-serine = D-glyceraldehyde 3-phosphate + L-tryptophan + H2O. It functions in the pathway amino-acid biosynthesis; L-tryptophan biosynthesis; L-tryptophan from chorismate: step 5/5. The beta subunit is responsible for the synthesis of L-tryptophan from indole and L-serine. This Sodalis glossinidius (strain morsitans) protein is Tryptophan synthase beta chain.